The sequence spans 405 residues: Arginine biosynthesis bifunctional protein ArgJ (405 aa).

The substrate site is built by T167, K190, T201, E281, N400, and S405. Residue T201 is the Nucleophile of the active site.

Belongs to the ArgJ family. As to quaternary structure, heterotetramer of two alpha and two beta chains.

The protein resides in the cytoplasm. The catalysed reaction is N(2)-acetyl-L-ornithine + L-glutamate = N-acetyl-L-glutamate + L-ornithine. It catalyses the reaction L-glutamate + acetyl-CoA = N-acetyl-L-glutamate + CoA + H(+). It participates in amino-acid biosynthesis; L-arginine biosynthesis; L-ornithine and N-acetyl-L-glutamate from L-glutamate and N(2)-acetyl-L-ornithine (cyclic): step 1/1. It functions in the pathway amino-acid biosynthesis; L-arginine biosynthesis; N(2)-acetyl-L-ornithine from L-glutamate: step 1/4. Its function is as follows. Catalyzes two activities which are involved in the cyclic version of arginine biosynthesis: the synthesis of N-acetylglutamate from glutamate and acetyl-CoA as the acetyl donor, and of ornithine by transacetylation between N(2)-acetylornithine and glutamate. The polypeptide is Arginine biosynthesis bifunctional protein ArgJ (Nocardia farcinica (strain IFM 10152)).